The chain runs to 94 residues: Co-chaperonin GroES (94 aa).

This sequence belongs to the GroES chaperonin family. Heptamer of 7 subunits arranged in a ring. Interacts with the chaperonin GroEL.

It localises to the cytoplasm. Its function is as follows. Together with the chaperonin GroEL, plays an essential role in assisting protein folding. The GroEL-GroES system forms a nano-cage that allows encapsulation of the non-native substrate proteins and provides a physical environment optimized to promote and accelerate protein folding. GroES binds to the apical surface of the GroEL ring, thereby capping the opening of the GroEL channel. This Clostridium beijerinckii (strain ATCC 51743 / NCIMB 8052) (Clostridium acetobutylicum) protein is Co-chaperonin GroES.